The primary structure comprises 124 residues: uncharacterized protein (124 aa).

An N-terminal signal peptide occupies residues 1 to 23; that stretch reads MHKLLKLLSITLIGLSVATGVQA.

The protein belongs to the cytochrome b562 family.

This is an uncharacterized protein from Pasteurella multocida (strain Pm70).